A 141-amino-acid chain; its full sequence is ATP synthase epsilon chain (141 aa).

The protein belongs to the ATPase epsilon chain family. As to quaternary structure, F-type ATPases have 2 components, CF(1) - the catalytic core - and CF(0) - the membrane proton channel. CF(1) has five subunits: alpha(3), beta(3), gamma(1), delta(1), epsilon(1). CF(0) has three main subunits: a, b and c.

It is found in the cell inner membrane. In terms of biological role, produces ATP from ADP in the presence of a proton gradient across the membrane. In Burkholderia multivorans (strain ATCC 17616 / 249), this protein is ATP synthase epsilon chain.